Here is a 304-residue protein sequence, read N- to C-terminus: tRNA pseudouridine synthase B (304 aa).

Asp38 functions as the Nucleophile in the catalytic mechanism. A PUA domain is found at 227 to 302 (LPKVEIYKDF…RIFKLKKVFK (76 aa)).

It belongs to the pseudouridine synthase TruB family. Type 1 subfamily.

The catalysed reaction is uridine(55) in tRNA = pseudouridine(55) in tRNA. In terms of biological role, responsible for synthesis of pseudouridine from uracil-55 in the psi GC loop of transfer RNAs. The polypeptide is tRNA pseudouridine synthase B (Thermosipho melanesiensis (strain DSM 12029 / CIP 104789 / BI429)).